The primary structure comprises 143 residues: MQFNISDIIKTLPHSYPFLLVDRVIECDPGKSIKAIKNVTFNEPFFIGHFPGHPIMPGVLIIESLAQASAICVLGKETIENKVVYLRSIENAKFRKLVTPGDTLILQANIQSVCLGVYKFRCIASVSEEKVAEATISAVLQNK.

Residue His-49 is part of the active site.

It belongs to the thioester dehydratase family. FabZ subfamily.

The protein resides in the cytoplasm. The catalysed reaction is a (3R)-hydroxyacyl-[ACP] = a (2E)-enoyl-[ACP] + H2O. Its function is as follows. Involved in unsaturated fatty acids biosynthesis. Catalyzes the dehydration of short chain beta-hydroxyacyl-ACPs and long chain saturated and unsaturated beta-hydroxyacyl-ACPs. This chain is 3-hydroxyacyl-[acyl-carrier-protein] dehydratase FabZ, found in Wolbachia pipientis wMel.